A 604-amino-acid chain; its full sequence is NADP-dependent malic enzyme, mitochondrial (604 aa).

The tract at residues 28 to 50 (SAPAQGCHSKSGPPRPVPLKKRG) is disordered. The Proton donor role is filled by Tyr-137. Residue Arg-190 coordinates NADP(+). Lys-208 (proton acceptor) is an active-site residue. Residues Glu-280, Asp-281, and Asp-304 each coordinate a divalent metal cation. Asp-304 serves as a coordination point for NADP(+). Ser-371 is modified (phosphoserine). Position 443 (Asn-443) interacts with NADP(+).

Belongs to the malic enzymes family. Requires Mg(2+) as cofactor. The cofactor is Mn(2+).

The protein resides in the mitochondrion matrix. It catalyses the reaction (S)-malate + NADP(+) = pyruvate + CO2 + NADPH. The catalysed reaction is oxaloacetate + H(+) = pyruvate + CO2. The chain is NADP-dependent malic enzyme, mitochondrial (Me3) from Mus musculus (Mouse).